The primary structure comprises 89 residues: Small ribosomal subunit protein uS15 (89 aa).

Belongs to the universal ribosomal protein uS15 family. In terms of assembly, part of the 30S ribosomal subunit. Forms a bridge to the 50S subunit in the 70S ribosome, contacting the 23S rRNA.

In terms of biological role, one of the primary rRNA binding proteins, it binds directly to 16S rRNA where it helps nucleate assembly of the platform of the 30S subunit by binding and bridging several RNA helices of the 16S rRNA. Functionally, forms an intersubunit bridge (bridge B4) with the 23S rRNA of the 50S subunit in the ribosome. The sequence is that of Small ribosomal subunit protein uS15 from Mycobacterium marinum (strain ATCC BAA-535 / M).